The following is a 379-amino-acid chain: 2-nitroimidazole nitrohydrolase (379 aa).

Cys-357 serves as the catalytic Amidino-cysteine intermediate.

The protein belongs to the arginine deiminase family.

The enzyme catalyses 2-nitroimidazole + H2O = 1,3-dihydro-2H-imidazol-2-one + nitrite + H(+). Functionally, involved in the biodegradation of 2-Nitroimidazole (2NI) which is a natural antibiotic and an analog of the synthetic nitroimidazoles used for treatment of tuberculosis, Chagas disease (also called American Trypanosomiasis) and cancer. Catalyzes the hydrolytic denitration of 2NI to produce imidazol-2-one and nitrite. It is also active against the 2NI synthetic derivative benznidazole. NnhA confers drug resistance to 2NI. The polypeptide is 2-nitroimidazole nitrohydrolase (nnhA) (Mycobacterium sp. (strain JS330)).